Here is a 300-residue protein sequence, read N- to C-terminus: F-box/LRR-repeat protein 15 (300 aa).

Methionine 1 bears the N-acetylmethionine mark. The F-box domain occupies 19-66; the sequence is LLDLPWEDVLLPHVLNWVPLRQLLRLQRVSRAFRALVQLHLARLRRFD. An interaction with SMURF1 region spans residues 113-269; it reads NPQLRSVALA…EPSLSRLRKR (157 aa). LRR repeat units lie at residues 141 to 162, 167 to 188, 194 to 215, 220 to 241, and 246 to 267; these read RLQR…RGLA, ALEE…VYLA, GLRS…QELA, QLEH…RTLA, and ALRS…SRLR.

It belongs to the FBXL15 family. In terms of assembly, part of the SCF (SKP1-CUL1-F-box) E3 ubiquitin-protein ligase complex SCF(FBXL15) composed of CUL1, SKP1, RBX1 and FBXL15. As to expression, expressed in heart, liver, spleen, bone, muscle, brain and kidney (at protein level).

The protein resides in the cytoplasm. It functions in the pathway protein modification; protein ubiquitination. Its function is as follows. Substrate recognition component of a SCF (SKP1-CUL1-F-box protein) E3 ubiquitin-protein ligase complex which mediates the ubiquitination and subsequent proteasomal degradation of SMURF1, thereby acting as a positive regulator of the BMP signaling pathway. Required for dorsal/ventral pattern formation and bone mass maintenance. Also mediates ubiquitination of SMURF2 and WWP2. The protein is F-box/LRR-repeat protein 15 (Fbxl15) of Mus musculus (Mouse).